Consider the following 162-residue polypeptide: RNA pyrophosphohydrolase (162 aa).

The region spanning 7–149 is the Nudix hydrolase domain; sequence KYRPCVGIML…KKEVYKTVIE (143 aa). The Nudix box signature appears at 40-61; sequence GGVDDGEELEQAALRELLEEVG.

This sequence belongs to the Nudix hydrolase family. RppH subfamily. Requires a divalent metal cation as cofactor.

Its function is as follows. Accelerates the degradation of transcripts by removing pyrophosphate from the 5'-end of triphosphorylated RNA, leading to a more labile monophosphorylated state that can stimulate subsequent ribonuclease cleavage. The chain is RNA pyrophosphohydrolase from Wolbachia pipientis wMel.